Here is a 344-residue protein sequence, read N- to C-terminus: Dihydroorotate dehydrogenase (quinone) (344 aa).

FMN-binding positions include 65–69 (AGLDK) and Thr-89. Lys-69 contributes to the substrate binding site. 114 to 118 (NRMGF) contacts substrate. FMN is bound by residues Asn-145 and Asn-178. Asn-178 provides a ligand contact to substrate. Ser-181 (nucleophile) is an active-site residue. Residue Asn-183 coordinates substrate. FMN contacts are provided by Lys-223 and Thr-251. 252–253 (NT) is a binding site for substrate. FMN-binding positions include Gly-274, Gly-303, and 324–325 (YS).

The protein belongs to the dihydroorotate dehydrogenase family. Type 2 subfamily. In terms of assembly, monomer. Requires FMN as cofactor.

The protein localises to the cell membrane. The catalysed reaction is (S)-dihydroorotate + a quinone = orotate + a quinol. It functions in the pathway pyrimidine metabolism; UMP biosynthesis via de novo pathway; orotate from (S)-dihydroorotate (quinone route): step 1/1. Functionally, catalyzes the conversion of dihydroorotate to orotate with quinone as electron acceptor. In Cupriavidus pinatubonensis (strain JMP 134 / LMG 1197) (Cupriavidus necator (strain JMP 134)), this protein is Dihydroorotate dehydrogenase (quinone).